Reading from the N-terminus, the 454-residue chain is Bifunctional protein GlmU (454 aa).

Residues 1–231 (MDRATVSLIV…EAETLGVNTR (231 aa)) are pyrophosphorylase. UDP-N-acetyl-alpha-D-glucosamine contacts are provided by residues 11-14 (LAAG), K25, Q78, 83-84 (GT), 106-108 (YGD), G143, E157, N172, and N229. D108 provides a ligand contact to Mg(2+). Position 229 (N229) interacts with Mg(2+). The interval 232-252 (AQLAEAEAEFQKRARAAALED) is linker. The interval 253-454 (GVTLTAPDTV…AKAAKKKEAP (202 aa)) is N-acetyltransferase. 2 residues coordinate UDP-N-acetyl-alpha-D-glucosamine: R318 and K336. The active-site Proton acceptor is H348. Positions 351 and 362 each coordinate UDP-N-acetyl-alpha-D-glucosamine. Residues A365, 371–372 (NY), S390, S408, and R425 each bind acetyl-CoA.

It in the N-terminal section; belongs to the N-acetylglucosamine-1-phosphate uridyltransferase family. The protein in the C-terminal section; belongs to the transferase hexapeptide repeat family. As to quaternary structure, homotrimer. It depends on Mg(2+) as a cofactor.

Its subcellular location is the cytoplasm. It catalyses the reaction alpha-D-glucosamine 1-phosphate + acetyl-CoA = N-acetyl-alpha-D-glucosamine 1-phosphate + CoA + H(+). It carries out the reaction N-acetyl-alpha-D-glucosamine 1-phosphate + UTP + H(+) = UDP-N-acetyl-alpha-D-glucosamine + diphosphate. Its pathway is nucleotide-sugar biosynthesis; UDP-N-acetyl-alpha-D-glucosamine biosynthesis; N-acetyl-alpha-D-glucosamine 1-phosphate from alpha-D-glucosamine 6-phosphate (route II): step 2/2. It participates in nucleotide-sugar biosynthesis; UDP-N-acetyl-alpha-D-glucosamine biosynthesis; UDP-N-acetyl-alpha-D-glucosamine from N-acetyl-alpha-D-glucosamine 1-phosphate: step 1/1. The protein operates within bacterial outer membrane biogenesis; LPS lipid A biosynthesis. Catalyzes the last two sequential reactions in the de novo biosynthetic pathway for UDP-N-acetylglucosamine (UDP-GlcNAc). The C-terminal domain catalyzes the transfer of acetyl group from acetyl coenzyme A to glucosamine-1-phosphate (GlcN-1-P) to produce N-acetylglucosamine-1-phosphate (GlcNAc-1-P), which is converted into UDP-GlcNAc by the transfer of uridine 5-monophosphate (from uridine 5-triphosphate), a reaction catalyzed by the N-terminal domain. In Cereibacter sphaeroides (strain ATCC 17023 / DSM 158 / JCM 6121 / CCUG 31486 / LMG 2827 / NBRC 12203 / NCIMB 8253 / ATH 2.4.1.) (Rhodobacter sphaeroides), this protein is Bifunctional protein GlmU.